The chain runs to 181 residues: Inner membrane-spanning protein YciB (181 aa).

Helical transmembrane passes span 3 to 23, 49 to 69, 76 to 96, 119 to 139, and 149 to 169; these read FLFD…YGIY, TMLW…LILQ, WKPS…QAIF, VNAS…YVAF, and FKLF…GLML.

The protein belongs to the YciB family.

It localises to the cell inner membrane. Functionally, plays a role in cell envelope biogenesis, maintenance of cell envelope integrity and membrane homeostasis. The chain is Inner membrane-spanning protein YciB from Nitrosospira multiformis (strain ATCC 25196 / NCIMB 11849 / C 71).